Consider the following 607-residue polypeptide: Autophagy-related protein 16-1 (607 aa).

Residues 13-43 are interaction with ATG5; that stretch reads WKRHISEQLRRRDRLQRQAFEEIILQYNKLL. Residues 78 to 230 are a coiled coil; the sequence is NDNQLQEMAQ…QKELAEAAKE (153 aa). Serine 139 carries the post-translational modification Phosphoserine; by CK2. The segment at 207 to 230 is WIPI2-binding; that stretch reads AENEKDSRRRQARLQKELAEAAKE. Positions 230–242 are RB1CC1-binding; it reads EPLPVEQDDDIEV. Serine 269 and serine 287 each carry phosphoserine. Residues 296–299 carry the Caspase cleavage motif; it reads DNVD. 7 WD repeats span residues 320–359, 364–403, 406–445, 447–484, 486–525, 532–573, and 575–607; these read AHDG…CEFK, GSNA…LRHT, GHSG…CIKT, FAGS…IVRE, ELLG…IKQT, KCGS…KVLS, and QHSS…WAQY.

The protein belongs to the WD repeat ATG16 family. In terms of assembly, homodimer. Homooligomer. Heterooligomer with ATG16L2. Interacts with WIPI1. Interacts with WIPI2. Interacts with RB1CC1; the interaction is required for ULK1 complex-dependent autophagy. Interacts with ATG5. Part of the minor complex composed of 4 sets of ATG12-ATG5 and ATG16L1 (400 kDa); this complex interacts with ATG3 leading to disruption of ATG7 interaction and promotion of ATG8-like proteins lipidation. Part of the major complex composed of 8 sets of ATG12-ATG5 and ATG16L1 (800 kDa). Interacts with RAB33B (GTP- and GDP-bound forms); the complex consists of a tetramer where two RAB33B molecules bind independently one molecule of the ATG16L1 homodimer; the interaction promotes ATG12-ATG5-ATG16L1 complex recruitment to phagophores. Interacts (via WD repeats) with TMEM59; the interaction mediates unconventional autophagic activity of TMEM59. Interacts with TLR2. Interacts (via WD repeats) with MEFV. Interacts with PPP1CA; the interaction dephosphorylates ATG16L1 causing dissociation of ATG12-ATG5-ATG16L1 complex. Interacts (via N-terminal) with CLTC. Interacts with NOD1. Interacts with NOD2. Interacts with TUFM. Interacts with TRIM16. Interacts (via WD repeats) with SPATA33. Interacts with IRGM. In terms of processing, proteolytic cleavage by activated CASP3 leads to degradation and may regulate autophagy upon cellular stress and apoptotic stimuli. Post-translationally, phosphorylation at Ser-139 promotes association with the ATG12-ATG5 conjugate to form the ATG12-ATG5-ATG16L1 complex.

Its subcellular location is the cytoplasm. It localises to the preautophagosomal structure membrane. The protein resides in the endosome membrane. The protein localises to the lysosome membrane. Plays an essential role in both canonical and non-canonical autophagy: interacts with ATG12-ATG5 to mediate the lipidation to ATG8 family proteins (MAP1LC3A, MAP1LC3B, MAP1LC3C, GABARAPL1, GABARAPL2 and GABARAP). Acts as a molecular hub, coordinating autophagy pathways via distinct domains that support either canonical or non-canonical signaling. During canonical autophagy, interacts with ATG12-ATG5 to mediate the conjugation of phosphatidylethanolamine (PE) to ATG8 proteins, to produce a membrane-bound activated form of ATG8. Thereby, controls the elongation of the nascent autophagosomal membrane. As part of the ATG8 conjugation system with ATG5 and ATG12, required for recruitment of LRRK2 to stressed lysosomes and induction of LRRK2 kinase activity in response to lysosomal stress. Also involved in non-canonical autophagy, a parallel pathway involving conjugation of ATG8 proteins to single membranes at endolysosomal compartments, probably by catalyzing conjugation of phosphatidylserine (PS) to ATG8. Non-canonical autophagy plays a key role in epithelial cells to limit lethal infection by influenza A (IAV) virus. Regulates mitochondrial antiviral signaling (MAVS)-dependent type I interferon (IFN-I) production. Negatively regulates NOD1- and NOD2-driven inflammatory cytokine response. Instead, promotes an autophagy-dependent antibacterial pathway together with NOD1 or NOD2. Plays a role in regulating morphology and function of Paneth cell. The protein is Autophagy-related protein 16-1 of Homo sapiens (Human).